A 51-amino-acid polypeptide reads, in one-letter code: Nawaprin (51 aa).

In terms of domain architecture, WAP spans 1-50 (NEKSGSCPDMSMPIPPLGICKTLCNSDSGCPNVQKCCKNGCGFMTCTTPV). 4 disulfide bridges follow: cysteine 7-cysteine 37, cysteine 20-cysteine 41, cysteine 24-cysteine 36, and cysteine 30-cysteine 46.

As to expression, expressed by the venom gland.

It localises to the secreted. Functionally, damages membranes of susceptible bacteria. Has no hemolytic activity. Not toxic to mice. Does not inhibit the proteinases elastase and cathepsin G. This chain is Nawaprin, found in Naja nigricollis (Black-necked spitting cobra).